The chain runs to 89 residues: MAATQSEIRYLTPPSVDVKKKKYCRFKKNGIKYIDYKDPEFLKKFLNEQGKILPRRITGTSLKFQRRVAQAVKRARHLALLPYVTDLMK.

It belongs to the bacterial ribosomal protein bS18 family. In terms of assembly, part of the 30S ribosomal subunit. Forms a tight heterodimer with protein bS6.

Binds as a heterodimer with protein bS6 to the central domain of the 16S rRNA, where it helps stabilize the platform of the 30S subunit. The chain is Small ribosomal subunit protein bS18 from Parabacteroides distasonis (strain ATCC 8503 / DSM 20701 / CIP 104284 / JCM 5825 / NCTC 11152).